The sequence spans 147 residues: Cyanate hydratase (147 aa).

Active-site residues include R88, E91, and S114.

This sequence belongs to the cyanase family.

The catalysed reaction is cyanate + hydrogencarbonate + 3 H(+) = NH4(+) + 2 CO2. Catalyzes the reaction of cyanate with bicarbonate to produce ammonia and carbon dioxide. The chain is Cyanate hydratase from Parasynechococcus marenigrum (strain WH8102).